The sequence spans 518 residues: MTSSKIEMPGEVKADPAALMASLHLLPSPTLNLEIKHTKIFINNEWQNSESGRVFPVYNPATGEQICEIQEADKVDTDKAVRAARLAFSLGSVWRRMDASERGQLLDKLADLVERDRAVLATMESLNSGKPFLQAFYVDLQGVIKTLRYYAGWADKIHGMTIPVDGDYFTFTRHEPIGVCGQIIPWNFPLLMFAWKIAPALCCGNTVVIKPAEQTPLSALYMGALIKEAGFPPGVVNILPGFGPIVGAAIASHVGIDKIAFTGSTEVGKLIQEAAGRSNLKRVTLELGGKSPNIIFADADLDYAVEQAHQGVFFNQGQCCTAGSRIYVEESIYEEFVRRSVERAKRRVVGSPFDPTTEQGPQIDKKQYNKILELIQSGITEGAKLECGGKGLGRKGFFIEPTVFSNVTDDMRIAKEEIFGPVQEILRFKTVDEVIERANNSDFGLVAAVFTNDINKALTVSSAMQAGTVWINCYNALNAQSPFGGFKMSGNGREMGESGLREYSEVKTVTIKIPQKNS.

Residues 184–186, 210–213, and 264–266 each bind NAD(+); these read IPW, KPAE, and STE. The Proton acceptor role is filled by glutamate 286. Cysteine 320 functions as the Nucleophile in the catalytic mechanism. NAD(+) contacts are provided by residues 366 to 370 and glutamate 417; that span reads KQYNK.

This sequence belongs to the aldehyde dehydrogenase family. In terms of assembly, homotetramer.

It is found in the cytoplasm. The catalysed reaction is retinal + NAD(+) + H2O = retinoate + NADH + 2 H(+). It catalyses the reaction all-trans-retinal + NAD(+) + H2O = all-trans-retinoate + NADH + 2 H(+). It carries out the reaction all-trans-13,14-dihydroretinal + NAD(+) + H2O = all-trans-13,14-dihydroretinoate + NADH + 2 H(+). It functions in the pathway cofactor metabolism; retinol metabolism. Catalyzes the NAD-dependent oxidation of aldehyde substrates, such as all-trans-retinal and all-trans-13,14-dihydroretinal, to their corresponding carboxylic acids, all-trans-retinoate and all-trans-13,14-dihydroretinoate, respectively. Retinoate signaling is critical for the transcriptional control of many genes, for instance it is crucial for initiation of meiosis in both male and female. Recognizes retinal as substrate, both in its free form and when bound to cellular retinol-binding protein. Lacks activity with benzaldehyde, acetaldehyde and octanal. Displays complete lack of activity with citral. The sequence is that of Retinal dehydrogenase 2 (ALDH1A2) from Gallus gallus (Chicken).